A 149-amino-acid chain; its full sequence is Probable flagellum biosynthesis repressor protein FlbT (149 aa).

Belongs to the FlbT family.

In terms of biological role, has a post-transcriptional repressor function in flagellum biogenesis. Associates with the 5'-UTR of fljK mRNA and promotes its degradation. This Sinorhizobium medicae (strain WSM419) (Ensifer medicae) protein is Probable flagellum biosynthesis repressor protein FlbT.